Here is a 199-residue protein sequence, read N- to C-terminus: MSSMEKHLFNLKFAAKELQRNSKKCDKEEKAEKVKVKKAIQKGNMEVARIHAENAIRQKNQSVNFLRMSARVDAVAARVQTAVTMNQVTKSMAGVVKGMDATLKSMNLEKISGLMEKFERQFETLDVQTAQMEDSMSSTTTLTTPQGQVDTLMMEMADEAGLDLNMELPQGQTGSVGTSVASAEQDELSQRLAKLRDQV.

2 coiled-coil regions span residues 10-30 (NLKFAAKELQRNSKKCDKEEK) and 178-199 (TSVASAEQDELSQRLAKLRDQV). The interval 167 to 199 (ELPQGQTGSVGTSVASAEQDELSQRLAKLRDQV) is disordered. Over residues 170-182 (QGQTGSVGTSVAS) the composition is skewed to polar residues. The MIT-interacting motif motif lies at 186–196 (DELSQRLAKLR).

Belongs to the SNF7 family. As to quaternary structure, probable peripherally associated component of the endosomal sorting required for transport complex III (ESCRT-III).

The protein localises to the cytoplasm. The protein resides in the cytosol. It is found in the endosome. It localises to the late endosome membrane. Functionally, probable peripherally associated component of the endosomal sorting required for transport complex III (ESCRT-III) which is involved in multivesicular bodies (MVBs) formation and sorting of endosomal cargo proteins into MVBs. MVBs contain intraluminal vesicles (ILVs) that are generated by invagination and scission from the limiting membrane of the endosome and mostly are delivered to lysosomes enabling degradation of membrane proteins, such as stimulated growth factor receptors, lysosomal enzymes and lipids. This is Charged multivesicular body protein 1b (chmp1b) from Danio rerio (Zebrafish).